Consider the following 205-residue polypeptide: MISINIVGEVDSILIESILELDRRITINSSNIDPNFIIVYEKFDEYYTFLKEFIGKIPIVIITGNTSYSRKCYFYSLGIDLYIIKNNESKSLILCRILNEIKKYIKYVNDDFIDFENHQFVFNNYLVNLSNIELKILRCLYINLGRYVSKEELKKGVWDTEDFVDSNTINVYIHRLRDSLKNCKEIEIINERKLGYKILIRKDLC.

The ompR/PhoB-type DNA-binding region spans 103-200 (KYIKYVNDDF…ERKLGYKILI (98 aa)).

To the C-terminus of E.coli phosphate regulon transcriptional regulatory protein PhoB.

This chain is Putative epidermin response regulator (epiQ), found in Staphylococcus epidermidis.